Here is a 416-residue protein sequence, read N- to C-terminus: MIFKFSQKALVALCLVVGLAEAVPSKSRVVSRASTFDYNGIVRGVNIGGWLVLEPWITPSIFDNAGDAAVDEWTLTATLGQDQAKAVLSQHWSTFITQGDFHRIAQAGMNHVRIPIGYWAVSSLPDEPYVDGQLEYLDNAISWARDAGLKVVIDLHGAPGSQNGFDNSGRKGPIAWQQGNTVSQTVDAFRALAERYLPQSDVVAAIEALNEPNIPGGVSEAGLRDYYDQIADVVRQINPDTSVFLSDGFLSTASWNGFKTGEDVVMDTHHYEMFDNYLISLDIHGHVKSACDFGKQIKGSDKPVVVGEWSGAVTDCTKYLNGKGVPTRYQGEYANNPKYGDCGDKTQGSVADLSDQERADTRRFIEAQLDAYEGKNGWLFWTWKTEGAPGWDMQDLLANGVFPSPLTDRQFPNQCA.

Residues 1 to 22 (MIFKFSQKALVALCLVVGLAEA) form the signal peptide. Residue E211 is the Proton donor of the active site. Intrachain disulfides connect C291–C415 and C316–C342. E308 serves as the catalytic Nucleophile.

Belongs to the glycosyl hydrolase 5 (cellulase A) family. In terms of assembly, monomer. Requires Mn(2+) as cofactor.

The protein resides in the secreted. The catalysed reaction is Successive hydrolysis of beta-D-glucose units from the non-reducing ends of (1-&gt;3)-beta-D-glucans, releasing alpha-glucose.. Beta-glucanases participate in the metabolism of beta-glucan, the main structural component of the cell wall. It could also function biosynthetically as a transglycosylase. The sequence is that of Probable glucan 1,3-beta-glucosidase A (exgA) from Neosartorya fischeri (strain ATCC 1020 / DSM 3700 / CBS 544.65 / FGSC A1164 / JCM 1740 / NRRL 181 / WB 181) (Aspergillus fischerianus).